A 1415-amino-acid chain; its full sequence is G8 domain-containing protein DDB_G0278975 (1415 aa).

The N-terminal stretch at 1–24 (MKINKIILFFFLSCLYLFSSSVSA) is a signal peptide. Helical transmembrane passes span 107-127 (INLN…GLFT) and 138-158 (LLFI…SIKI). 5 N-linked (GlcNAc...) asparagine glycosylation sites follow: Asn-245, Asn-366, Asn-428, Asn-466, and Asn-579. The region spanning 566–692 (STWPNGIIPS…YHNTWSKLSA (127 aa)) is the G8 domain. PbH1 repeat units follow at residues 819 to 841 (LKNS…TIHG) and 842 to 864 (TNNV…YLED). Residues Asn-844, Asn-985, Asn-1009, Asn-1023, Asn-1099, Asn-1244, and Asn-1342 are each glycosylated (N-linked (GlcNAc...) asparagine).

This sequence belongs to the comF family.

It localises to the membrane. The polypeptide is G8 domain-containing protein DDB_G0278975 (Dictyostelium discoideum (Social amoeba)).